Reading from the N-terminus, the 549-residue chain is CTP synthase (549 aa).

The interval 1–267 is amidoligase domain; sequence MAKFVFITGG…CREVLDVLQL (267 aa). Ser13 is a binding site for CTP. Residue Ser13 participates in UTP binding. ATP contacts are provided by residues 14 to 19 and Asp71; that span reads SIGKGI. Mg(2+)-binding residues include Asp71 and Glu141. Residues 148–150, 188–193, and Lys224 contribute to the CTP site; these read DIE and KTKPTQ. UTP is bound by residues 188 to 193 and Lys224; that span reads KTKPTQ. Residues 292 to 534 form the Glutamine amidotransferase type-1 domain; that stretch reads KVALVGKYVQ…IEAAQQRLPD (243 aa). Gly354 contributes to the L-glutamine binding site. The Nucleophile; for glutamine hydrolysis role is filled by Cys381. Residues 382 to 385, Glu405, and Arg462 each bind L-glutamine; that span reads LGMQ. Catalysis depends on residues His507 and Glu509.

Belongs to the CTP synthase family. In terms of assembly, homotetramer.

It carries out the reaction UTP + L-glutamine + ATP + H2O = CTP + L-glutamate + ADP + phosphate + 2 H(+). The catalysed reaction is L-glutamine + H2O = L-glutamate + NH4(+). The enzyme catalyses UTP + NH4(+) + ATP = CTP + ADP + phosphate + 2 H(+). It participates in pyrimidine metabolism; CTP biosynthesis via de novo pathway; CTP from UDP: step 2/2. Allosterically activated by GTP, when glutamine is the substrate; GTP has no effect on the reaction when ammonia is the substrate. The allosteric effector GTP functions by stabilizing the protein conformation that binds the tetrahedral intermediate(s) formed during glutamine hydrolysis. Inhibited by the product CTP, via allosteric rather than competitive inhibition. Its function is as follows. Catalyzes the ATP-dependent amination of UTP to CTP with either L-glutamine or ammonia as the source of nitrogen. Regulates intracellular CTP levels through interactions with the four ribonucleotide triphosphates. The chain is CTP synthase from Synechococcus sp. (strain CC9902).